A 314-amino-acid polypeptide reads, in one-letter code: Target of rapamycin complex subunit wat1 (314 aa).

WD repeat units follow at residues 1–35, 38–76, 81–120, 122–161, 165–204, 213–252, and 257–296; these read MSVQ…CSRT, HADS…QMPL, GHTN…VQRN, DHKS…CTHE, EEDV…GASL, AHQR…FMLE, and GHQR…TIRQ. Position 141 is a phosphoserine (S141).

It belongs to the WD repeat LST8 family. In terms of assembly, the target of rapamycin complex 1 (TORC1) is composed of at least mip1, pop3/wat1, tco89, toc1 and tor2. The target of rapamycin complex 2 (TORC2) is composed of at least bit61, pop3/wat1, sin1, ste20 and tor1. Interacts with prp2.

It is found in the cytoplasm. The protein resides in the nucleus. Component of both TORC1 and TORC2, which regulate multiple cellular processes to control cell growth in response to environmental signals. Nutrient limitation and environmental stress signals cause inactivation of TORC1. Active TORC1 positively controls cell growth and ribosome biogenesis by regulating ribosomal protein gene expression. TORC1 negatively controls G1 cell-cycle arrest, sexual development and amino acid uptake. Represses mating, meiosis and sporulation efficiency by interfering with the functions of the transcription factor ste11 and the meiosis-promoting RNA-binding protein mei2. TORC2 is required for cell survival under various stress conditions. TORC2 positively controls G1 cell-cycle arrest, sexual development and amino acid uptake. Positively regulates amino acid uptake through the control of expression of amino acid permeases. May play a role in mRNA maturation as a coupling protein between splicing and synthesis and/or stabilization. This is Target of rapamycin complex subunit wat1 from Schizosaccharomyces pombe (strain 972 / ATCC 24843) (Fission yeast).